The sequence spans 1589 residues: Paternally-expressed gene 3 protein (1589 aa).

Residues 46–128 form the SCAN box domain; that stretch reads HQRFRNLIYV…TLLENYKEMY (83 aa). 3 disordered regions span residues 128-230, 266-306, and 319-349; these read YQPE…ESYQ, DGHS…RRGI, and KFIKDVSRSSKSGRARESSDRSQRFPRMSDD. The segment covering 129–142 has biased composition (acidic residues); that stretch reads QPEDDNNSDVTSDD. Composition is skewed to basic and acidic residues over residues 143 to 152, 161 to 182, 206 to 225, and 295 to 306; these read DMTRNRRESS, SGDRDWDRRGRSRDMEPRDRWS, FEMDRDDDRDSRAYESRSQD, and PEAKKSTHRRGI. 3 C2H2-type zinc fingers span residues 454–476, 507–529, and 565–587; these read YVCDECGRSFSVISEFVEHQIMH, FECKDCGETFNKSAALAEHRKIH, and YECRVCKETFLHSSALIEHQKIH. Over residues 588–607 the composition is skewed to basic and acidic residues; sequence FGDDKDNEREHERERERGET. The tract at residues 588–610 is disordered; it reads FGDDKDNEREHERERERGETFRP. A C2H2-type 4 zinc finger spans residues 627–649; the sequence is YECKVCGETFLHSSSLKEHQKIH. The interval 838–930 is disordered; the sequence is LVASKPPRSH…EFSVPSSNVR (93 aa). The span at 868–881 shows a compositional bias: basic and acidic residues; that stretch reads LNDKRQKIPARENP. Residues 969–991 form a C2H2-type 5 zinc finger; it reads YECQECGECFAHSSDLTEHQKIH. Residues 1056–1104 are disordered; it reads EKSHGEESQGENTDGEETHSEETHGQETIEDPVIQSSDMEDPQKDDPDD. Basic and acidic residues predominate over residues 1071–1082; the sequence is EETHSEETHGQE. 5 C2H2-type zinc fingers span residues 1107–1129, 1163–1185, 1225–1247, 1282–1304, and 1332–1354; these read YECEDCGLGFVDLTDLTDHQKVH, YECPKCGESFIHSSFLFEHQRIH, IRCLLCGQGFIHSSALNEHMRLH, FECAVCGESFVNPAELADHVTVH, and YECKDCGKSFIHSTVLTKHKELH. Over residues 1396–1416 the composition is skewed to acidic residues; it reads AEPEVEAAEPEVEAAEPEVEA. The segment at 1396–1496 is disordered; that stretch reads AEPEVEAAEP…GIEDPEEGED (101 aa). A run of 7 repeats spans residues 1398–1404, 1405–1411, 1412–1418, 1419–1423, 1426–1430, 1433–1437, and 1440–1444. Residues 1398-1418 are 3 X 7 AA repeat of P-E-V-E-A-A-E; sequence PEVEAAEPEVEAAEPEVEAAE. The interval 1419-1444 is 4 X 5 AA repeat of P-X-G-E-A; it reads PNGEAEGPDGEAAEPIGEAGQPNGEA. 2 stretches are compositionally biased toward acidic residues: residues 1450–1467 and 1476–1496; these read DADEPDGAGIEDPEERAE and PEGDADEPDGVGIEDPEEGED. C2H2-type zinc fingers lie at residues 1506–1528 and 1565–1587; these read YDCHECTETFTSSTAFGEHLKTH and FKCDVCGQLFNDRLSLARHQNTH.

The protein belongs to the krueppel C2H2-type zinc-finger protein family. As to quaternary structure, homodimer. Interacts with SIAH1A and SIAH2. Interacts with TRAF2.

The protein resides in the nucleus. Its subcellular location is the cytoplasm. In terms of biological role, induces apoptosis in cooperation with SIAH1A. Acts as a mediator between p53/TP53 and BAX in a neuronal death pathway that is activated by DNA damage. Acts synergistically with TRAF2 and inhibits TNF induced apoptosis through activation of NF-kappa-B. The chain is Paternally-expressed gene 3 protein (PEG3) from Gorilla gorilla gorilla (Western lowland gorilla).